The sequence spans 286 residues: 4-hydroxybenzoate octaprenyltransferase (286 aa).

7 consecutive transmembrane segments (helical) span residues 21-40 (GTLL…AGGM), 96-116 (LFVI…GLVV), 142-162 (FLGV…TGEV), 167-187 (WWLF…YAMV), 210-230 (QIIG…GWSA), 235-255 (LYGL…MLIF), and 266-286 (FLNN…DYLF).

The protein belongs to the UbiA prenyltransferase family. The cofactor is Mg(2+).

It localises to the cell inner membrane. The enzyme catalyses all-trans-octaprenyl diphosphate + 4-hydroxybenzoate = 4-hydroxy-3-(all-trans-octaprenyl)benzoate + diphosphate. It functions in the pathway cofactor biosynthesis; ubiquinone biosynthesis. Functionally, catalyzes the prenylation of para-hydroxybenzoate (PHB) with an all-trans polyprenyl group. Mediates the second step in the final reaction sequence of ubiquinone-8 (UQ-8) biosynthesis, which is the condensation of the polyisoprenoid side chain with PHB, generating the first membrane-bound Q intermediate 3-octaprenyl-4-hydroxybenzoate. This chain is 4-hydroxybenzoate octaprenyltransferase, found in Shewanella sp. (strain ANA-3).